The sequence spans 225 residues: Urease accessory protein UreE (225 aa).

Positions 171–215 (HHGHEHSHDHEHGHSHAAHEHSHGHDHTHGHDHDHGDHVHDESCG) are enriched in basic and acidic residues. Residues 171–225 (HHGHEHSHDHEHGHSHAAHEHSHGHDHTHGHDHDHGDHVHDESCGHGHHHHHAHR) form a disordered region. Positions 216–225 (HGHHHHHAHR) are enriched in basic residues.

This sequence belongs to the UreE family.

The protein resides in the cytoplasm. In terms of biological role, involved in urease metallocenter assembly. Binds nickel. Probably functions as a nickel donor during metallocenter assembly. The chain is Urease accessory protein UreE from Paraburkholderia xenovorans (strain LB400).